The following is a 1114-amino-acid chain: Isoleucine--tRNA ligase (1114 aa).

The 'HIGH' region motif lies at 61–71; it reads PTANGQPGTHH. The 'KMSKS' region signature appears at 640-644; the sequence is KMSKH. Lys-643 serves as a coordination point for ATP.

It belongs to the class-I aminoacyl-tRNA synthetase family. IleS type 2 subfamily. As to quaternary structure, monomer. The cofactor is Zn(2+).

It is found in the cytoplasm. It catalyses the reaction tRNA(Ile) + L-isoleucine + ATP = L-isoleucyl-tRNA(Ile) + AMP + diphosphate. Its function is as follows. Catalyzes the attachment of isoleucine to tRNA(Ile). As IleRS can inadvertently accommodate and process structurally similar amino acids such as valine, to avoid such errors it has two additional distinct tRNA(Ile)-dependent editing activities. One activity is designated as 'pretransfer' editing and involves the hydrolysis of activated Val-AMP. The other activity is designated 'posttransfer' editing and involves deacylation of mischarged Val-tRNA(Ile). The protein is Isoleucine--tRNA ligase of Cutibacterium acnes (strain DSM 16379 / KPA171202) (Propionibacterium acnes).